The chain runs to 169 residues: Ribosome maturation factor RimP (169 aa).

Belongs to the RimP family.

The protein resides in the cytoplasm. In terms of biological role, required for maturation of 30S ribosomal subunits. The polypeptide is Ribosome maturation factor RimP (Coprothermobacter proteolyticus (strain ATCC 35245 / DSM 5265 / OCM 4 / BT)).